The sequence spans 1216 residues: MKLIPFLSEEEIQKLQEAEANSSKEQKKTAEQIEAIYTSGQNILVSASAGSGKTFVMAERILDQLARGVEISQLFISTFTVKAANELKERLEKKISKKIQETDDVDLKQHLGRQLADLPNAAIGTMDSFTQKFLGKHGYLLDIAPNFRILQNQSEQLLLENEVFHEVFEAHYQGKQKETFSHLLKNFAGRGKDERGLRQQVYKIYDFLQSTSNPQKWLSDSFLKGFEKADFTSEKEKLTEQIKQALWDLESFFRYHLDNDAKEFAKAAYLENVQLILDEIGSLNQESDSQAYQAVLAHVVAISKEKNGRALTNASRKADLKPLADAYNEERKTQFAKLGQLSDQITILDYQERYHGDTWKLAKTFQSFMSDFVEAYRQRKRQENAFEFADISHYTIEILENFPQVRESYQERFHEVMVDEYQDTNHIQERMLELLSNGHNRFMVGDIKQSIYRFRQADPQIFNEKFQRYAQNPQEGKLILLKENFRSSSEVLSATNDVFERLMDQEVGEINYDNKHQLVFANTKLTPNPDNKAEFLLYDKDDTGEEEESQTETKLTGEMRLVIKEILKLHQEKGVAFKEIALLTSSRSRNDQILLALSEYGIPVKTDGEQNNYLQSLEVQVMLDTLRVIHNPLQDYALVALMKSPMFGFDEDELARLSLQKAEDKVHENLYEKLVNAQKMASSQKGLIHTALAEKLKQFMDILASWRLYAKTHSLYDLIWKIYNDRFYYDYVGALPNGPARQANLYALALRADQFEKSNFKGLPRFIRMIDQVLEAQHDLASVVVAPPKDAVELMTIHKSKGLEFPYVFILNMDQDFNKQDSMSEVILSRQNGLGVKYIAKMETGAVEDHYPKTIKLSIPSLTYRQNEEELQLASYSEQMRLLYVAMTRAEKKLYLVGKGSREKLESKEYPAAKNGKLNSNTRLQARNFQDWLWAISKVFTKDKLNFSYRFIGEDQLTREAIGELETKSPLQDSSQADNRQSDTIKEALEMLKEVEVYNTLHRAAIELPSVQTPSQIKKFYEPVMDMEGVEIAGQGQSVGKKISFDLPDFSTKEKVTGAEIGSATHELMQRIDLSQQLTLASLTETLKQVQTSQAVRDKINLDKILAFFDTVLGQEILANTDHLYREQPFSMLKRDQKSQEDFVVRGILDGYLLYENKIVLFDYKTDRYDEPSQLVDRYRGQLALYEEALSRAYSIENIEKYLILLGKDEVQVVKV.

The region spanning 26–488 (QKKTAEQIEA…ILLKENFRSS (463 aa)) is the UvrD-like helicase ATP-binding domain. Residue 47 to 54 (ASAGSGKT) participates in ATP binding. A UvrD-like helicase C-terminal domain is found at 515–802 (KHQLVFANTK…ELMTIHKSKG (288 aa)).

This sequence belongs to the helicase family. AddA subfamily. In terms of assembly, heterodimer of AddA and AddB/RexB. The cofactor is Mg(2+).

It carries out the reaction Couples ATP hydrolysis with the unwinding of duplex DNA by translocating in the 3'-5' direction.. It catalyses the reaction ATP + H2O = ADP + phosphate + H(+). In terms of biological role, the heterodimer acts as both an ATP-dependent DNA helicase and an ATP-dependent, dual-direction single-stranded exonuclease. Recognizes the chi site generating a DNA molecule suitable for the initiation of homologous recombination. The AddA nuclease domain is required for chi fragment generation; this subunit has the helicase and 3' -&gt; 5' nuclease activities. The polypeptide is ATP-dependent helicase/nuclease subunit A (Streptococcus pneumoniae (strain Hungary19A-6)).